We begin with the raw amino-acid sequence, 128 residues long: Large ribosomal subunit protein uL18 (128 aa).

The segment at 1–36 (MAKRSSLTRRGVSPRAAARARRHMRVRKKVRGTPER) is disordered. Residues 18-31 (ARARRHMRVRKKVR) show a composition bias toward basic residues.

It belongs to the universal ribosomal protein uL18 family. Part of the 50S ribosomal subunit; part of the 5S rRNA/L5/L18/L25 subcomplex. Contacts the 5S and 23S rRNAs.

Functionally, this is one of the proteins that bind and probably mediate the attachment of the 5S RNA into the large ribosomal subunit, where it forms part of the central protuberance. This chain is Large ribosomal subunit protein uL18, found in Thermobifida fusca (strain YX).